Here is a 113-residue protein sequence, read N- to C-terminus: U11-theraphotoxin-Hhn1e (113 aa).

Residues 1–21 (MNTVRVTFLLVFVLAVSLGQA) form the signal peptide. The propeptide occupies 22-74 (DKDENRMEMLEKTEQGKSYLDFAENLLLQKLEELEARLLEEDSEESRNSRQKR). Positions 60 to 69 (LEEDSEESRN) are enriched in basic and acidic residues. The disordered stretch occupies residues 60–87 (LEEDSEESRNSRQKRCIGEGVPRDENDP). 2 disulfide bridges follow: C75/C90 and C89/C110.

Belongs to the neurotoxin 14 (magi-1) family. 01 (HNTX-16) subfamily. In terms of tissue distribution, expressed by the venom gland.

Its subcellular location is the secreted. Probable ion channel inhibitor. The sequence is that of U11-theraphotoxin-Hhn1e from Cyriopagopus hainanus (Chinese bird spider).